Reading from the N-terminus, the 156-residue chain is Snaclec A3 (156 aa).

A signal peptide spans 1 to 23; it reads MGRSISVSFGLLVVFLSLSGTGA. 3 disulfides stabilise this stretch: Cys27/Cys38, Cys55/Cys154, and Cys129/Cys146. The region spanning 34–155 is the C-type lectin domain; that stretch reads HEGHCYKVFN…CGQPYRFTCE (122 aa).

It belongs to the snaclec family. In terms of assembly, heterodimer; disulfide-linked. In terms of tissue distribution, expressed by the venom gland.

Its subcellular location is the secreted. Interferes with one step of hemostasis (modulation of platelet aggregation, or coagulation cascade, for example). The polypeptide is Snaclec A3 (Macrovipera lebetinus (Levantine viper)).